Consider the following 323-residue polypeptide: tRNA U34 carboxymethyltransferase (323 aa).

Residues Lys91, Trp105, Lys110, Gly130, 181 to 182 (IE), Met196, Tyr200, and Arg315 each bind carboxy-S-adenosyl-L-methionine.

The protein belongs to the class I-like SAM-binding methyltransferase superfamily. CmoB family. As to quaternary structure, homotetramer.

The catalysed reaction is carboxy-S-adenosyl-L-methionine + 5-hydroxyuridine(34) in tRNA = 5-carboxymethoxyuridine(34) in tRNA + S-adenosyl-L-homocysteine + H(+). Functionally, catalyzes carboxymethyl transfer from carboxy-S-adenosyl-L-methionine (Cx-SAM) to 5-hydroxyuridine (ho5U) to form 5-carboxymethoxyuridine (cmo5U) at position 34 in tRNAs. The protein is tRNA U34 carboxymethyltransferase of Yersinia pestis bv. Antiqua (strain Antiqua).